The following is a 179-amino-acid chain: MARFQEFYKEKVVPGLIEKFGYKSVMEVPRITKITLNMGLGEAIADKKIIENAVGDLTKIAGQKPVVTKARKAIAGFKIRQGYPIGAMVTLRGRAMYEFLDRFVTVALPRVRDFRGVSGRAFDGRGNYNIGVKEQIIFPEIDYDKIDALRGLNISITTTAKTDDEAKALLASFKFPFRN.

The protein belongs to the universal ribosomal protein uL5 family. As to quaternary structure, part of the 50S ribosomal subunit; part of the 5S rRNA/L5/L18/L25 subcomplex. Contacts the 5S rRNA and the P site tRNA. Forms a bridge to the 30S subunit in the 70S ribosome.

This is one of the proteins that bind and probably mediate the attachment of the 5S RNA into the large ribosomal subunit, where it forms part of the central protuberance. In the 70S ribosome it contacts protein S13 of the 30S subunit (bridge B1b), connecting the 2 subunits; this bridge is implicated in subunit movement. Contacts the P site tRNA; the 5S rRNA and some of its associated proteins might help stabilize positioning of ribosome-bound tRNAs. The protein is Large ribosomal subunit protein uL5 of Burkholderia ambifaria (strain MC40-6).